Reading from the N-terminus, the 687-residue chain is Auxin response factor 14 (687 aa).

Positions 133-235 (FCKTLTASDT…QLRLGVRRAV (103 aa)) form a DNA-binding region, TF-B3.

This sequence belongs to the ARF family. Homo and heterodimers. Expressed in roots, culms, leaves and young panicles.

The protein localises to the nucleus. Functionally, auxin response factors (ARFs) are transcriptional factors that bind specifically to the DNA sequence 5'-TGTCTC-3' found in the auxin-responsive promoter elements (AuxREs). This Oryza sativa subsp. japonica (Rice) protein is Auxin response factor 14 (ARF14).